We begin with the raw amino-acid sequence, 479 residues long: HSPB1-associated protein 1 (479 aa).

The disordered stretch occupies residues Met1–Val25. The segment at Glu88–Arg208 is interaction with HSPB1. In terms of domain architecture, JmjC spans Trp124–Thr288. Residues Pro347 to Asn412 are disordered. Residues Val356 to Ser369 are compositionally biased toward basic and acidic residues.

In terms of assembly, interacts with CRYAB and HSPB1. In terms of tissue distribution, widely expressed. Highly expressed by Sertoli cells in testis (at protein level).

The protein localises to the cytoplasm. May play a role in cellular stress response. The sequence is that of HSPB1-associated protein 1 (Hspbap1) from Rattus norvegicus (Rat).